A 374-amino-acid polypeptide reads, in one-letter code: Peptide chain release factor 2 (374 aa).

The residue at position 256 (Gln-256) is an N5-methylglutamine.

Belongs to the prokaryotic/mitochondrial release factor family. In terms of processing, methylated by PrmC. Methylation increases the termination efficiency of RF2.

Its subcellular location is the cytoplasm. In terms of biological role, peptide chain release factor 2 directs the termination of translation in response to the peptide chain termination codons UGA and UAA. This chain is Peptide chain release factor 2, found in Mycobacterium leprae (strain Br4923).